The chain runs to 179 residues: Large ribosomal subunit protein uL6 (179 aa).

This sequence belongs to the universal ribosomal protein uL6 family. In terms of assembly, part of the 50S ribosomal subunit.

Functionally, this protein binds to the 23S rRNA, and is important in its secondary structure. It is located near the subunit interface in the base of the L7/L12 stalk, and near the tRNA binding site of the peptidyltransferase center. The protein is Large ribosomal subunit protein uL6 of Halothermothrix orenii (strain H 168 / OCM 544 / DSM 9562).